Reading from the N-terminus, the 613-residue chain is Proline--tRNA ligase (613 aa).

The protein belongs to the class-II aminoacyl-tRNA synthetase family. ProS type 1 subfamily. In terms of assembly, homodimer.

It localises to the cytoplasm. The catalysed reaction is tRNA(Pro) + L-proline + ATP = L-prolyl-tRNA(Pro) + AMP + diphosphate. Catalyzes the attachment of proline to tRNA(Pro) in a two-step reaction: proline is first activated by ATP to form Pro-AMP and then transferred to the acceptor end of tRNA(Pro). As ProRS can inadvertently accommodate and process non-cognate amino acids such as alanine and cysteine, to avoid such errors it has two additional distinct editing activities against alanine. One activity is designated as 'pretransfer' editing and involves the tRNA(Pro)-independent hydrolysis of activated Ala-AMP. The other activity is designated 'posttransfer' editing and involves deacylation of mischarged Ala-tRNA(Pro). The misacylated Cys-tRNA(Pro) is not edited by ProRS. The polypeptide is Proline--tRNA ligase (Tropheryma whipplei (strain Twist) (Whipple's bacillus)).